The primary structure comprises 207 residues: 3-isopropylmalate dehydratase small subunit (207 aa).

The protein belongs to the LeuD family. LeuD type 1 subfamily. As to quaternary structure, heterodimer of LeuC and LeuD.

The catalysed reaction is (2R,3S)-3-isopropylmalate = (2S)-2-isopropylmalate. It participates in amino-acid biosynthesis; L-leucine biosynthesis; L-leucine from 3-methyl-2-oxobutanoate: step 2/4. Its function is as follows. Catalyzes the isomerization between 2-isopropylmalate and 3-isopropylmalate, via the formation of 2-isopropylmaleate. This is 3-isopropylmalate dehydratase small subunit from Rhodospirillum rubrum (strain ATCC 11170 / ATH 1.1.1 / DSM 467 / LMG 4362 / NCIMB 8255 / S1).